A 435-amino-acid chain; its full sequence is Glutamate-1-semialdehyde 2,1-aminomutase (435 aa).

N6-(pyridoxal phosphate)lysine is present on K270.

The protein belongs to the class-III pyridoxal-phosphate-dependent aminotransferase family. HemL subfamily. Homodimer. It depends on pyridoxal 5'-phosphate as a cofactor.

It localises to the cytoplasm. The catalysed reaction is (S)-4-amino-5-oxopentanoate = 5-aminolevulinate. It participates in porphyrin-containing compound metabolism; protoporphyrin-IX biosynthesis; 5-aminolevulinate from L-glutamyl-tRNA(Glu): step 2/2. This chain is Glutamate-1-semialdehyde 2,1-aminomutase, found in Wigglesworthia glossinidia brevipalpis.